The sequence spans 137 residues: Small ribosomal subunit protein uS12 (137 aa).

Residues 1 to 26 are disordered; sequence MPTINQLVTKGRKRKASKTKSPALNQ.

Belongs to the universal ribosomal protein uS12 family. In terms of assembly, part of the 30S ribosomal subunit. Contacts proteins S8 and S17. May interact with IF1 in the 30S initiation complex.

Functionally, with S4 and S5 plays an important role in translational accuracy. Its function is as follows. Interacts with and stabilizes bases of the 16S rRNA that are involved in tRNA selection in the A site and with the mRNA backbone. Located at the interface of the 30S and 50S subunits, it traverses the body of the 30S subunit contacting proteins on the other side and probably holding the rRNA structure together. The combined cluster of proteins S8, S12 and S17 appears to hold together the shoulder and platform of the 30S subunit. The sequence is that of Small ribosomal subunit protein uS12 from Mycoplasmopsis pulmonis (strain UAB CTIP) (Mycoplasma pulmonis).